Consider the following 508-residue polypeptide: ATP synthase subunit alpha (508 aa).

Residue 169 to 176 participates in ATP binding; sequence GDRGTGKS.

The protein belongs to the ATPase alpha/beta chains family. In terms of assembly, F-type ATPases have 2 components, CF(1) - the catalytic core - and CF(0) - the membrane proton channel. CF(1) has five subunits: alpha(3), beta(3), gamma(1), delta(1), epsilon(1). CF(0) has three main subunits: a(1), b(2) and c(9-12). The alpha and beta chains form an alternating ring which encloses part of the gamma chain. CF(1) is attached to CF(0) by a central stalk formed by the gamma and epsilon chains, while a peripheral stalk is formed by the delta and b chains.

The protein localises to the cell membrane. The catalysed reaction is ATP + H2O + 4 H(+)(in) = ADP + phosphate + 5 H(+)(out). In terms of biological role, produces ATP from ADP in the presence of a proton gradient across the membrane. The alpha chain is a regulatory subunit. In Natranaerobius thermophilus (strain ATCC BAA-1301 / DSM 18059 / JW/NM-WN-LF), this protein is ATP synthase subunit alpha.